Reading from the N-terminus, the 262-residue chain is Urease accessory protein UreD (262 aa).

Belongs to the UreD family. As to quaternary structure, ureD, UreF and UreG form a complex that acts as a GTP-hydrolysis-dependent molecular chaperone, activating the urease apoprotein by helping to assemble the nickel containing metallocenter of UreC. The UreE protein probably delivers the nickel.

It localises to the cytoplasm. In terms of biological role, required for maturation of urease via the functional incorporation of the urease nickel metallocenter. The polypeptide is Urease accessory protein UreD (Acetivibrio thermocellus (strain ATCC 27405 / DSM 1237 / JCM 9322 / NBRC 103400 / NCIMB 10682 / NRRL B-4536 / VPI 7372) (Clostridium thermocellum)).